Consider the following 589-residue polypeptide: Peroxisomal biogenesis factor 8 (589 aa).

Positions 587–589 (SKL) match the Microbody targeting signal motif.

The protein localises to the peroxisome matrix. In terms of biological role, required for peroxisome assembly. The protein is Peroxisomal biogenesis factor 8 (PEX8) of Saccharomyces cerevisiae (strain ATCC 204508 / S288c) (Baker's yeast).